The following is a 1197-amino-acid chain: uncharacterized protein (1197 aa).

This is an uncharacterized protein from Sinorhizobium fredii (strain NBRC 101917 / NGR234).